Here is a 158-residue protein sequence, read N- to C-terminus: Non-specific lipid transfer protein GPI-anchored 29 (158 aa).

The signal sequence occupies residues 1 to 24 (MAYFSTATSLLLLVLSVSSPYVHG). 4 disulfide bridges follow: Cys28–Cys71, Cys38–Cys55, Cys56–Cys95, and Cys69–Cys105. Residue Asn84 is glycosylated (N-linked (GlcNAc...) asparagine). Ser134 carries GPI-anchor amidated serine lipidation. The propeptide at 135 to 158 (KGNSLIPISGFSFVIVTALAMFRI) is removed in mature form.

It belongs to the plant LTP family. In terms of tissue distribution, confined to the ovaries of the inflorescence.

It localises to the secreted. It is found in the cell membrane. Probable lipid transfer protein. This is Non-specific lipid transfer protein GPI-anchored 29 from Arabidopsis thaliana (Mouse-ear cress).